The following is a 189-amino-acid chain: Peptidyl-tRNA hydrolase (189 aa).

Y14 is a binding site for tRNA. The active-site Proton acceptor is H19. The tRNA site is built by Y64, N66, and N112.

It belongs to the PTH family. As to quaternary structure, monomer.

It is found in the cytoplasm. It carries out the reaction an N-acyl-L-alpha-aminoacyl-tRNA + H2O = an N-acyl-L-amino acid + a tRNA + H(+). Hydrolyzes ribosome-free peptidyl-tRNAs (with 1 or more amino acids incorporated), which drop off the ribosome during protein synthesis, or as a result of ribosome stalling. In terms of biological role, catalyzes the release of premature peptidyl moieties from peptidyl-tRNA molecules trapped in stalled 50S ribosomal subunits, and thus maintains levels of free tRNAs and 50S ribosomes. The sequence is that of Peptidyl-tRNA hydrolase from Clostridium botulinum (strain Langeland / NCTC 10281 / Type F).